The primary structure comprises 445 residues: tRNA modification GTPase MnmE (445 aa).

Arginine 21, glutamate 78, and lysine 117 together coordinate (6S)-5-formyl-5,6,7,8-tetrahydrofolate. The TrmE-type G domain occupies 213 to 370 (GFRIALVGAP…LKETLSERVV (158 aa)). GTP is bound by residues 223–228 (NAGKST), 242–248 (TATPGTT), and 267–270 (DTAG). 2 residues coordinate Mg(2+): serine 227 and threonine 248. Lysine 445 serves as a coordination point for (6S)-5-formyl-5,6,7,8-tetrahydrofolate.

The protein belongs to the TRAFAC class TrmE-Era-EngA-EngB-Septin-like GTPase superfamily. TrmE GTPase family. Homodimer. Heterotetramer of two MnmE and two MnmG subunits. The cofactor is K(+).

The protein resides in the cytoplasm. Exhibits a very high intrinsic GTPase hydrolysis rate. Involved in the addition of a carboxymethylaminomethyl (cmnm) group at the wobble position (U34) of certain tRNAs, forming tRNA-cmnm(5)s(2)U34. This chain is tRNA modification GTPase MnmE, found in Phenylobacterium zucineum (strain HLK1).